A 286-amino-acid chain; its full sequence is uncharacterized protein (286 aa).

A helical membrane pass occupies residues 8–28; that stretch reads PLSGFISSLIWWLLFFYLIMA.

This sequence to M.jannaschii MJ1495.

The protein localises to the membrane. This is an uncharacterized protein from Methanocaldococcus jannaschii (strain ATCC 43067 / DSM 2661 / JAL-1 / JCM 10045 / NBRC 100440) (Methanococcus jannaschii).